The primary structure comprises 454 residues: Immediate-early protein ICP-46 homolog (454 aa).

The stretch at 330 to 357 (EKDIETIEKYEKTIQELIVELHNLYLKR) forms a coiled coil. The tract at residues 428–454 (SSPTASLSSLSPPSSNNNSPIRSPIRM) is disordered.

Belongs to the IIV-6 393L family.

The protein is Immediate-early protein ICP-46 homolog of Invertebrate iridescent virus 6 (IIV-6).